The primary structure comprises 231 residues: Glycerol-3-phosphate acyltransferase (231 aa).

A run of 6 helical transmembrane segments spans residues 6–26 (FLFLFLFFYILGSIPTGLVIG), 55–75 (WGILVFLLDFCKGFVPLTIFL), 95–115 (LTMKISLLAISPILGHMFSLF), 130–150 (IITSFNPLIGISGIIFFAIFL), 152–172 (LFGYASLSSIMASTLVNIFLW), and 196–216 (LFYFSINFATLIIIAKHYSNI).

This sequence belongs to the PlsY family. Probably interacts with PlsX.

The protein localises to the cell membrane. The enzyme catalyses an acyl phosphate + sn-glycerol 3-phosphate = a 1-acyl-sn-glycero-3-phosphate + phosphate. It participates in lipid metabolism; phospholipid metabolism. In terms of biological role, catalyzes the transfer of an acyl group from acyl-phosphate (acyl-PO(4)) to glycerol-3-phosphate (G3P) to form lysophosphatidic acid (LPA). This enzyme utilizes acyl-phosphate as fatty acyl donor, but not acyl-CoA or acyl-ACP. This Aster yellows witches'-broom phytoplasma (strain AYWB) protein is Glycerol-3-phosphate acyltransferase.